The chain runs to 361 residues: Aminomethyltransferase (361 aa).

The protein belongs to the GcvT family. The glycine cleavage system is composed of four proteins: P, T, L and H.

The enzyme catalyses N(6)-[(R)-S(8)-aminomethyldihydrolipoyl]-L-lysyl-[protein] + (6S)-5,6,7,8-tetrahydrofolate = N(6)-[(R)-dihydrolipoyl]-L-lysyl-[protein] + (6R)-5,10-methylene-5,6,7,8-tetrahydrofolate + NH4(+). The glycine cleavage system catalyzes the degradation of glycine. This is Aminomethyltransferase from Herpetosiphon aurantiacus (strain ATCC 23779 / DSM 785 / 114-95).